Reading from the N-terminus, the 55-residue chain is MAKGIREKIRLNSSAGTGHFYTTTKNKRTMPEKMEIKKFDPVVRQHVIYKEGKIK.

Belongs to the bacterial ribosomal protein bL33 family.

This chain is Large ribosomal subunit protein bL33, found in Aeromonas hydrophila subsp. hydrophila (strain ATCC 7966 / DSM 30187 / BCRC 13018 / CCUG 14551 / JCM 1027 / KCTC 2358 / NCIMB 9240 / NCTC 8049).